Here is a 975-residue protein sequence, read N- to C-terminus: MVQIDLPAESAVRIRYPTLTKKLRKRSTLVIIVGLLLLCIITSTHISHNFSGSDTPKCRSIYMYPSYARIDGFDSRHTKLAKKYHLYLYREQGKDKEPKHGDEIQLDGIPVLFIPGNAGSFKQARSIAAASANLYFDHKSTIQNSNAKNMDYFTADFNEDFTAFHGQTMLDQAVYLNDAVRYILSMYAQSAAYKESNRPLPKSVILLGHSMGGIVARLMLTLPNHIPESVNTILTLSSPHSTAPVTFDGDILKLYDRVNSYWTSAMNDMGSYFRNNVSVISITGGILDDILPADYTNLQGIVPESNGFTTFTTTIPELWTPIDHLAIVWCDQLRYLLAKYILEIVNDDAGGKTATLDIRMRKGRKFFLSGLERITDADKLIDKNLSAPAVDFSDTESVPENHLLVLNSSESMSTGYAFNISKSVDYSFEMLTSLVQFDIFFCKDIYGKDCINGFSSFSKVPHSTSLQKFPTDSSWGESVSPFRFISLNGSLLQGFQIIVFQGSMKKKEDFVLAKYSDDKSIETASDGLWKLSLFPFRMSLKNKHSFVHGLAFPNLWSSLISFNLKTTFSDEIDSMFRPMMRQYVNNPYETKWHLLAASSSHEINMHNISPFIPLDDTIDKSLNLMFFIPPGEEISLRLSINWKLTLKMLYIRFRLAFASIPISIIALVLCYQFYYYDSPDSKFISFDTGLMNVLNNHSLLIFLFLSVGPIAINHKAILTLLHYLDPISLSKPSSDSHMLNNNYMLGLRETFVWWIGPVFFIISVALLFIILRLINVIEFAVIKISSAITRYTRITFPDPLNDMTHHKLLFNNRQLLGVCFISLGVMVYVPYQFAFILVSLIQMWNCMKLAVFTNRNNAKYSNIHNYNVSFLMLTIFMIPINAPIVVVFLRNFAIRWETAFRSHHNFLAIAPTLLLTLRNSQCNIPIIKNRMNWLIVVSILGYLSFYSFMYGIRNLYWVYHISNILNGVLFFLTIL.

A helical membrane pass occupies residues 27–47 (STLVIIVGLLLLCIITSTHIS). Residue Asn49 is glycosylated (N-linked (GlcNAc...) asparagine). Residue Ser210 is part of the active site. Asn276, Asn384, Asn407, Asn419, and Asn488 each carry an N-linked (GlcNAc...) asparagine glycan. Residues 655–675 (LAFASIPISIIALVLCYQFYY) form a helical membrane-spanning segment. N-linked (GlcNAc...) asparagine glycosylation is present at Asn696. Helical transmembrane passes span 699 to 719 (LLIFLFLSVGPIAINHKAILT), 751 to 771 (FVWWIGPVFFIISVALLFIIL), and 818 to 838 (VCFISLGVMVYVPYQFAFILV). N-linked (GlcNAc...) asparagine glycosylation occurs at Asn867. 3 helical membrane-spanning segments follow: residues 868 to 888 (VSFLMLTIFMIPINAPIVVVF), 932 to 952 (NWLIVVSILGYLSFYSFMYGI), and 955 to 975 (LYWVYHISNILNGVLFFLTIL).

The protein belongs to the GPI inositol-deacylase family.

Its subcellular location is the endoplasmic reticulum membrane. Involved in inositol deacylation of GPI-anchored proteins which plays important roles in the quality control and ER-associated degradation of GPI-anchored proteins. This chain is GPI inositol-deacylase (BST1), found in Kluyveromyces lactis (strain ATCC 8585 / CBS 2359 / DSM 70799 / NBRC 1267 / NRRL Y-1140 / WM37) (Yeast).